A 213-amino-acid polypeptide reads, in one-letter code: Protein GrpE (213 aa).

The segment covering 1 to 23 has biased composition (basic and acidic residues); that stretch reads MSDEKKPEAETSESLQKREEKLA. The interval 1 to 43 is disordered; it reads MSDEKKPEAETSESLQKREEKLAETLASEPAAQGEAEDAAAAG. The segment covering 29-43 has biased composition (low complexity); that stretch reads EPAAQGEAEDAAAAG.

This sequence belongs to the GrpE family. As to quaternary structure, homodimer.

The protein localises to the cytoplasm. In terms of biological role, participates actively in the response to hyperosmotic and heat shock by preventing the aggregation of stress-denatured proteins, in association with DnaK and GrpE. It is the nucleotide exchange factor for DnaK and may function as a thermosensor. Unfolded proteins bind initially to DnaJ; upon interaction with the DnaJ-bound protein, DnaK hydrolyzes its bound ATP, resulting in the formation of a stable complex. GrpE releases ADP from DnaK; ATP binding to DnaK triggers the release of the substrate protein, thus completing the reaction cycle. Several rounds of ATP-dependent interactions between DnaJ, DnaK and GrpE are required for fully efficient folding. This is Protein GrpE from Parvibaculum lavamentivorans (strain DS-1 / DSM 13023 / NCIMB 13966).